The primary structure comprises 138 residues: MIIGIGSDLSDIRRIQASLDRFGDRFRHRVFTEIERTRSDRKADAAASYAKRFAAKEACAKALGTGMRRGVFWRDMGVVNMRSGQPTMALTGGALRRLEEITPPGMTAHIHLSLTDDHPYAQAFVIIEALPAAPSAAE.

Mg(2+)-binding residues include D8 and E57.

It belongs to the P-Pant transferase superfamily. AcpS family. The cofactor is Mg(2+).

It is found in the cytoplasm. The enzyme catalyses apo-[ACP] + CoA = holo-[ACP] + adenosine 3',5'-bisphosphate + H(+). In terms of biological role, transfers the 4'-phosphopantetheine moiety from coenzyme A to a Ser of acyl-carrier-protein. In Phenylobacterium zucineum (strain HLK1), this protein is Holo-[acyl-carrier-protein] synthase.